Here is a 91-residue protein sequence, read N- to C-terminus: DNA-directed RNA polymerase subunit omega (91 aa).

Belongs to the RNA polymerase subunit omega family. In terms of assembly, the RNAP catalytic core consists of 2 alpha, 1 beta, 1 beta' and 1 omega subunit. When a sigma factor is associated with the core the holoenzyme is formed, which can initiate transcription.

It carries out the reaction RNA(n) + a ribonucleoside 5'-triphosphate = RNA(n+1) + diphosphate. In terms of biological role, promotes RNA polymerase assembly. Latches the N- and C-terminal regions of the beta' subunit thereby facilitating its interaction with the beta and alpha subunits. The protein is DNA-directed RNA polymerase subunit omega of Serratia proteamaculans (strain 568).